The sequence spans 363 residues: Homeobox protein Hox-A2a (363 aa).

Disordered regions lie at residues 30 to 88 (DSFQ…LPPE), 98 to 117 (SKRN…GPVC), 189 to 220 (RMKH…SDEE), and 268 to 308 (DKNL…LDVS). A compositionally biased stretch (polar residues) spans 31–44 (SFQSSSIKSSTLSR). The Antp-type hexapeptide motif lies at 88–93 (EYPWMR). The segment covering 103-113 (LPNSTTTTISN) has biased composition (polar residues). Residues 137 to 196 (SRRLRTAYTNTQLLELEKEFHFNKYLCRPRRVEIAALLDLTERQVKVWFQNRRMKHKRQT) constitute a DNA-binding region (homeobox).

It belongs to the Antp homeobox family. Proboscipedia subfamily.

Its subcellular location is the nucleus. In terms of biological role, sequence-specific transcription factor which is part of a developmental regulatory system that provides cells with specific positional identities on the anterior-posterior axis. This chain is Homeobox protein Hox-A2a (hoxa2a), found in Takifugu rubripes (Japanese pufferfish).